Reading from the N-terminus, the 453-residue chain is Argininosuccinate lyase (453 aa).

This sequence belongs to the lyase 1 family. Argininosuccinate lyase subfamily.

The protein resides in the cytoplasm. It carries out the reaction 2-(N(omega)-L-arginino)succinate = fumarate + L-arginine. It participates in amino-acid biosynthesis; L-arginine biosynthesis; L-arginine from L-ornithine and carbamoyl phosphate: step 3/3. This chain is Argininosuccinate lyase, found in Shewanella loihica (strain ATCC BAA-1088 / PV-4).